The chain runs to 79 residues: Small ribosomal subunit protein bS16c (79 aa).

It belongs to the bacterial ribosomal protein bS16 family.

It localises to the plastid. Its subcellular location is the chloroplast. The chain is Small ribosomal subunit protein bS16c from Thalassiosira pseudonana (Marine diatom).